A 522-amino-acid polypeptide reads, in one-letter code: Sorting nexin-1 (522 aa).

2 disordered regions span residues 1–89 and 115–142; these read MASG…QDLF and SLPP…QEDQ. Phosphoserine is present on residues Ser-32 and Ser-39. Over residues 35–45 the composition is skewed to acidic residues; sequence EAGDSDTEGED. Residues Thr-41 and Thr-48 each carry the phosphothreonine modification. Phosphoserine occurs at positions 58 and 72. Residues 60–73 show a composition bias toward polar residues; sequence KRTTSLLPINNGSK. Residues 132–142 are compositionally biased toward acidic residues; it reads EELEEEEQEDQ. The PX domain maps to 143-272; the sequence is FDLTVGITDP…EFLEKEELPR (130 aa). A 1,2-diacyl-sn-glycero-3-phospho-(1D-myo-inositol-3-phosphate) is bound by residues Arg-186, Ser-188, and Lys-214. Ser-188 carries the post-translational modification Phosphoserine. At Lys-237 the chain carries N6-acetyllysine. Arg-238 provides a ligand contact to a 1,2-diacyl-sn-glycero-3-phospho-(1D-myo-inositol-3-phosphate). Ser-280 bears the Phosphoserine mark. Residues 281-298 form a membrane-binding amphipathic helix region; sequence GAGLLKMFNKATDAVSKM. The BAR domain maps to 302-522; the sequence is MNESDIWFEE…AFLPEAKAIS (221 aa).

Belongs to the sorting nexin family. As to quaternary structure, predominantly forms heterodimers with BAR domain-containing sorting nexins SNX5, SNX6 and SNX32; can self-associate to form homodimers. The heterodimers are proposed to self-assemble into helical arrays on the membrane to stabilize and expand local membrane curvature underlying endosomal tubule formation. Thought to be a component of the originally described retromer complex (also called SNX-BAR retromer) which is a pentamer containing the heterotrimeric retromer cargo-selective complex (CSC), also described as vacuolar protein sorting subcomplex (VPS) and a heterodimeric membrane-deforming subcomplex formed between SNX1 or SNX2 and SNX5 or SNX6 (also called SNX-BAR subcomplex); the respective CSC and SNX-BAR subcomplexes associate with low affinity. Interacts with SNX5, SNX6, SNX32, VPS26A, VPS29, VPS35, DRD5, DENND5A, KALRN, RHOG (GDP-bound form). The interaction with SNX2 is reported controversially. Interacts with DNAJC13; prevented by presence of HGS. Interacts with HGS.

It localises to the endosome membrane. Its subcellular location is the golgi apparatus. The protein localises to the trans-Golgi network membrane. It is found in the early endosome membrane. The protein resides in the cell projection. It localises to the lamellipodium. Functionally, involved in several stages of intracellular trafficking. Interacts with membranes containing phosphatidylinositol 3-phosphate (PtdIns(3P)) or phosphatidylinositol 3,5-bisphosphate (PtdIns(3,5)P2). Acts in part as component of the retromer membrane-deforming SNX-BAR subcomplex. The SNX-BAR retromer mediates retrograde transport of cargo proteins from endosomes to the trans-Golgi network (TGN) and is involved in endosome-to-plasma membrane transport for cargo protein recycling. The SNX-BAR subcomplex functions to deform the donor membrane into a tubular profile called endosome-to-TGN transport carrier (ETC). Can sense membrane curvature and has in vitro vesicle-to-membrane remodeling activity. Involved in retrograde endosome-to-TGN transport of lysosomal enzyme receptors (IGF2R, M6PR and SORT1). Plays a role in targeting ligand-activated EGFR to the lysosomes for degradation after endocytosis from the cell surface and release from the Golgi. Involvement in retromer-independent endocytic trafficking of P2RY1 and lysosomal degradation of protease-activated receptor-1/F2R. Promotes KALRN- and RHOG-dependent but retromer-independent membrane remodeling such as lamellipodium formation; the function is dependent on GEF activity of KALRN. Required for endocytosis of DRD5 upon agonist stimulation but not for basal receptor trafficking. The polypeptide is Sorting nexin-1 (SNX1) (Macaca fascicularis (Crab-eating macaque)).